The primary structure comprises 206 residues: Small ribosomal subunit protein uS4 (206 aa).

The region spanning 96 to 159 (SRLDNVVYRM…KKQARIVEGL (64 aa)) is the S4 RNA-binding domain.

This sequence belongs to the universal ribosomal protein uS4 family. Part of the 30S ribosomal subunit. Contacts protein S5. The interaction surface between S4 and S5 is involved in control of translational fidelity.

In terms of biological role, one of the primary rRNA binding proteins, it binds directly to 16S rRNA where it nucleates assembly of the body of the 30S subunit. With S5 and S12 plays an important role in translational accuracy. The protein is Small ribosomal subunit protein uS4 of Chromobacterium violaceum (strain ATCC 12472 / DSM 30191 / JCM 1249 / CCUG 213 / NBRC 12614 / NCIMB 9131 / NCTC 9757 / MK).